Consider the following 81-residue polypeptide: ATP synthase subunit c, chloroplastic (81 aa).

Transmembrane regions (helical) follow at residues 7–27 (AASV…PGVG) and 57–77 (LAFM…LLFA).

This sequence belongs to the ATPase C chain family. In terms of assembly, F-type ATPases have 2 components, F(1) - the catalytic core - and F(0) - the membrane proton channel. F(1) has five subunits: alpha(3), beta(3), gamma(1), delta(1), epsilon(1). F(0) has four main subunits: a(1), b(1), b'(1) and c(10-14). The alpha and beta chains form an alternating ring which encloses part of the gamma chain. F(1) is attached to F(0) by a central stalk formed by the gamma and epsilon chains, while a peripheral stalk is formed by the delta, b and b' chains.

Its subcellular location is the plastid. The protein resides in the chloroplast thylakoid membrane. Functionally, f(1)F(0) ATP synthase produces ATP from ADP in the presence of a proton or sodium gradient. F-type ATPases consist of two structural domains, F(1) containing the extramembraneous catalytic core and F(0) containing the membrane proton channel, linked together by a central stalk and a peripheral stalk. During catalysis, ATP synthesis in the catalytic domain of F(1) is coupled via a rotary mechanism of the central stalk subunits to proton translocation. Key component of the F(0) channel; it plays a direct role in translocation across the membrane. A homomeric c-ring of between 10-14 subunits forms the central stalk rotor element with the F(1) delta and epsilon subunits. The chain is ATP synthase subunit c, chloroplastic from Arabis hirsuta (Hairy rock-cress).